A 185-amino-acid polypeptide reads, in one-letter code: Ribosome-recycling factor (185 aa).

Belongs to the RRF family.

It localises to the cytoplasm. In terms of biological role, responsible for the release of ribosomes from messenger RNA at the termination of protein biosynthesis. May increase the efficiency of translation by recycling ribosomes from one round of translation to another. The protein is Ribosome-recycling factor of Shewanella sediminis (strain HAW-EB3).